The chain runs to 157 residues: Transcription elongation factor GreA (157 aa).

Belongs to the GreA/GreB family.

In terms of biological role, necessary for efficient RNA polymerase transcription elongation past template-encoded arresting sites. The arresting sites in DNA have the property of trapping a certain fraction of elongating RNA polymerases that pass through, resulting in locked ternary complexes. Cleavage of the nascent transcript by cleavage factors such as GreA or GreB allows the resumption of elongation from the new 3'terminus. GreA releases sequences of 2 to 3 nucleotides. This Brucella abortus (strain S19) protein is Transcription elongation factor GreA.